The following is a 1098-amino-acid chain: MAERGGDGGESERFNPGELRMAQQQALRFRGPAPPPNAVMRGPPPLMRPPPPFGMMRGPPPPPRPPFGRPPFDPNMPPMPPPGGIPPPMGPPHLQRPPFMPPPMSSMPPPPGMMFPPGMPPVTAPGTPALPPTEEIWVENKTPDGKVYYYNARTRESAWTKPDGVKVIQQSELTPMLAAQAQVQAQAQAQAQAQAQAQAQAQAQAQAQAQAQAQAQAQAQAQAQAQAQAQAQAQAQAQAQAQVQAQVQAQVQAQAVGASTPTTSSPAPAVSTSTSSSTPSSTTSTTTTATSVAQTVSTPTTQDQTPSSAVSVATPTVSVSTPAPTATPVQTVPQPHPQTLPPAVPHSVPQPTTAIPAFPPVMVPPFRVPLPGMPIPLPGVAMMQIVSCPYVKTVATTKTGVLPGMAPPIVPMIHPQVAIAASPATLAGATAVSEWTEYKTADGKTYYYNNRTLESTWEKPQELKEKEKLEEKIKEPIKEPSEEPLPMETEEEDPKEEPIKEIKEEPKEEEMTEEEKAAQKAKPVATAPIPGTPWCVVWTGDERVFFYNPTTRLSMWDRPDDLIGRADVDKIIQEPPHKKGMEELKKLRHPTPTMLSIQKWQFSMSAIKEEQELMEEINEDEPVKAKKRKRDDNKDIDSEKEAAMEAEIKAARERAIVPLEARMKQFKDMLLERGVSAFSTWEKELHKIVFDPRYLLLNPKERKQVFDQYVKTRAEEERREKKNKIMQAKEDFKKMMEEAKFNPRATFSEFAAKHAKDSRFKAIEKMKDREALFNEFVAAARKKEKEDSKTRGEKIKSDFFELLSNHHLDSQSRWSKVKDKVESDPRYKAVDSSSMREDLFKQYIEKIAKNLDSEKEKELERQARIEASLREREREVQKARSEQTKEIDREREQHKREEAIQNFKALLSDMVRSSDVSWSDTRRTLRKDHRWESGSLLEREEKEKLFNEHIEALTKKKREHFRQLLDETSAITLTSTWKEVKKIIKEDPRCIKFSSSDRKKQREFEEYIRDKYITAKADFRTLLKETKFITYRSKKLIQESDQHLKDVEKILQNDKRYLVLDCVPEERRKLIVAYVDDLDRRGPPPPPTASEPTRRSTK.

Residues M1–N15 are compositionally biased toward basic and acidic residues. Positions M1–S105 are disordered. Position 11 is a phosphoserine (S11). R20 bears the Omega-N-methylarginine mark. Asymmetric dimethylarginine occurs at positions 28, 30, 41, and 48. Residues P32–S105 are compositionally biased toward pro residues. Residues P131–G164 form the WW 1 domain. The stretch at Q184–Q244 forms a coiled coil. Positions S259–P333 are enriched in low complexity. The tract at residues S259–V348 is disordered. The segment covering Q334 to V344 has biased composition (pro residues). Residues A429–E462 form the WW 2 domain. Basic and acidic residues-rich tracts occupy residues L469–S481 and E496–P506. Residues L469–T526 are disordered. Glycyl lysine isopeptide (Lys-Gly) (interchain with G-Cter in SUMO2) cross-links involve residues K503 and K507. Positions P528–D561 constitute a WW 3 domain. Residues A606–A655 are a coiled coil. K608 participates in a covalent cross-link: Glycyl lysine isopeptide (Lys-Gly) (interchain with G-Cter in SUMO2). Residues E615–K640 are disordered. Positions K626–R630 match the Nuclear localization signal motif. The span at R630–K640 shows a compositional bias: basic and acidic residues. S638 bears the Phosphoserine mark. FF domains are found at residues L659 to T712, I725 to A779, and R791 to K846. Position 834 is a phosphoserine (S834). Residues I844–L906 are a coiled coil. The disordered stretch occupies residues R870–K895. 3 consecutive FF domains span residues R896–A952, T954–D1010, and Y1012–D1077. Phosphoserine is present on S933. Positions D1076 to K1098 are disordered.

Binds formin. Interacts (via the second WW domain) with TREX1 (via proline-rich region). Binds RNA polymerase II, HD and SF1. Detected in brain neurons.

It localises to the nucleus. Its function is as follows. Transcription factor that binds RNA polymerase II and inhibits the elongation of transcripts from target promoters. Regulates transcription elongation in a TATA box-dependent manner. Necessary for TAT-dependent activation of the human immunodeficiency virus type 1 (HIV-1) promoter. In Homo sapiens (Human), this protein is Transcription elongation regulator 1 (TCERG1).